We begin with the raw amino-acid sequence, 152 residues long: Small ribosomal subunit protein uS19z (152 aa).

It belongs to the universal ribosomal protein uS19 family.

It localises to the cytoplasm. This chain is Small ribosomal subunit protein uS19z (RPS15B), found in Arabidopsis thaliana (Mouse-ear cress).